Here is a 255-residue protein sequence, read N- to C-terminus: Hydroxyacylglutathione hydrolase (255 aa).

His59, His61, Asp63, His64, His118, Asp144, and His182 together coordinate Zn(2+).

Belongs to the metallo-beta-lactamase superfamily. Glyoxalase II family. Monomer. Requires Zn(2+) as cofactor.

It catalyses the reaction an S-(2-hydroxyacyl)glutathione + H2O = a 2-hydroxy carboxylate + glutathione + H(+). It participates in secondary metabolite metabolism; methylglyoxal degradation; (R)-lactate from methylglyoxal: step 2/2. Its function is as follows. Thiolesterase that catalyzes the hydrolysis of S-D-lactoyl-glutathione to form glutathione and D-lactic acid. The chain is Hydroxyacylglutathione hydrolase from Synechococcus sp. (strain WH7803).